The chain runs to 288 residues: Acyl-CoA-binding domain-containing protein 6 homolog (288 aa).

Positions 6–94 (IENKFKLAVD…VNALSPGWDS (89 aa)) constitute an ACB domain. An acyl-CoA contacts are provided by residues 36–40 (YCNYK), Lys62, and Tyr81. ANK repeat units lie at residues 200-229 (DGRT…NVNV) and 233-263 (EGMT…DKSI).

It localises to the cytoplasm. Binds long-chain acyl-coenzyme A molecules with a strong preference for unsaturated C18:1-CoA. Does not bind fatty acids. Plays a role in protein N-myristoylation. The sequence is that of Acyl-CoA-binding domain-containing protein 6 homolog (acbd6) from Dictyostelium discoideum (Social amoeba).